We begin with the raw amino-acid sequence, 426 residues long: MASARESTPRYLTLIGATLACSALALGAAQAQTEPAEPEAPAETAAADAAGQTEGQRGAAEAAAALAAGEADEPVILEAPAPDARRVYIQDPAHFAAITQQFVIDGSTGRILGMTDGGFLPHPVAAEDGSFFAQASTVFERIARGKRTDYVEVFDPVTFLPIADIELPDAPRFLVGTYQWMNALTPDNKNLLFYQFSPAPAVGVVDLEGKTFDRMLDVPDCYHIFPASPTVFYMNCRDGSLARVDFADGETKVTNTEVFHTEDELLINHPAFSLRSGRLVWPTYTGKIFQADLTAEGATFRAPIEALTEAERADDWRPGGWQQTAYHRQSDRIYLLVDQRDEWKHKAASRFVVVLNAETGERINKIELGHEIDSINVSQDAEPLLYALSAGTQTLHIYDAATGEELRSVDQLGRGPQIITTHDMDS.

The N-terminal stretch at 1–31 is a signal peptide; that stretch reads MASARESTPRYLTLIGATLACSALALGAAQA. The tract at residues 32–64 is disordered; it reads QTEPAEPEAPAETAAADAAGQTEGQRGAAEAAA. A disulfide bridge links C221 with C236.

It belongs to the aromatic amine dehydrogenase heavy chain family. As to quaternary structure, tetramer of two light and two heavy chains.

The protein localises to the periplasm. The enzyme catalyses 2 oxidized [amicyanin] + methylamine + H2O = 2 reduced [amicyanin] + formaldehyde + NH4(+) + 2 H(+). Functionally, methylamine dehydrogenase carries out the oxidation of methylamine. Electrons are passed from methylamine dehydrogenase to amicyanin. The chain is Methylamine dehydrogenase heavy chain (mauB) from Paracoccus versutus (Thiobacillus versutus).